Reading from the N-terminus, the 369-residue chain is MEEKKIRKVTLCDICHQSKAVMKRPKNLQKLCKECFYHVFETEIHNTIVDAQLFKPGDKVAIGASGGKDSTVLASVLKTLNEKYNYGLTLVLLSIDEGIVGYRDDSLATVKRNQIQYEMPLEIISYKDLYNWSMDEIVSCAGIRSSCTYCGVLRRQALDRGAAKLEIDHVVTGHNADDMAETVLMNLLRGDIARLERSCSILTSSEGSPIKRSKPFKYTYQKEIVLYAHYKKLDYFSTECSYAPEAFRGTARELLKALESVRPSCIMDIIYSGEHLVVAHKKKRTTEKYKNKPKKNIETEVNSDGSVNLTKKTDGSRCEKCGYLSSNKICKACVLLAGLEMNRPKVNIENNTAVEGSAKVMKTLEQLSF.

This sequence belongs to the TtcA family. CTU1/NCS6/ATPBD3 subfamily.

It localises to the cytoplasm. The protein operates within tRNA modification; 5-methoxycarbonylmethyl-2-thiouridine-tRNA biosynthesis. Its function is as follows. Plays a central role in 2-thiolation of mcm(5)S(2)U at tRNA wobble positions of tRNA(Lys), tRNA(Glu) and tRNA(Gln). Directly binds tRNAs and probably acts by catalyzing adenylation of tRNAs, an intermediate required for 2-thiolation. It is unclear whether it acts as a sulfurtransferase that transfers sulfur from thiocarboxylated URM1 onto the uridine of tRNAs at wobble position. Prior mcm(5) tRNA modification by the elongator complex is required for 2-thiolation. May also be involved in protein urmylation. The polypeptide is Cytoplasmic tRNA 2-thiolation protein 1 (Meyerozyma guilliermondii (strain ATCC 6260 / CBS 566 / DSM 6381 / JCM 1539 / NBRC 10279 / NRRL Y-324) (Yeast)).